Reading from the N-terminus, the 174-residue chain is Nucleoside-triphosphatase THEP1 (174 aa).

Residues 15-22 (GMPGVGKT) and 102-109 (LAIVDEIG) contribute to the ATP site.

It belongs to the THEP1 NTPase family.

It carries out the reaction a ribonucleoside 5'-triphosphate + H2O = a ribonucleoside 5'-diphosphate + phosphate + H(+). Has nucleotide phosphatase activity towards ATP, GTP, CTP, TTP and UTP. May hydrolyze nucleoside diphosphates with lower efficiency. This is Nucleoside-triphosphatase THEP1 from Pyrobaculum islandicum (strain DSM 4184 / JCM 9189 / GEO3).